The sequence spans 488 residues: Probable indole-3-acetic acid-amido synthetase GH3.6 (488 aa).

Belongs to the IAA-amido conjugating enzyme family. As to expression, expressed in roots and callus.

Its function is as follows. May catalyze the synthesis of indole-3-acetic acid (IAA)-amino acid conjugates, providing a mechanism for the plant to cope with the presence of excess auxin. The polypeptide is Probable indole-3-acetic acid-amido synthetase GH3.6 (GH3.6) (Oryza sativa subsp. japonica (Rice)).